A 754-amino-acid polypeptide reads, in one-letter code: 5-methyltetrahydropteroyltriglutamate--homocysteine methyltransferase (754 aa).

5-methyltetrahydropteroyltri-L-glutamate-binding positions include 15–18 (RELK) and Lys-114. Residues 430-432 (IGS) and Glu-483 contribute to the L-homocysteine site. Residues 430–432 (IGS) and Glu-483 each bind L-methionine. 5-methyltetrahydropteroyltri-L-glutamate contacts are provided by residues 514 to 515 (RC) and Trp-560. Asp-598 contacts L-homocysteine. Asp-598 contacts L-methionine. Glu-604 contacts 5-methyltetrahydropteroyltri-L-glutamate. The Zn(2+) site is built by His-641, Cys-643, and Glu-665. His-694 serves as the catalytic Proton donor. Cys-726 provides a ligand contact to Zn(2+).

Belongs to the vitamin-B12 independent methionine synthase family. It depends on Zn(2+) as a cofactor.

It catalyses the reaction 5-methyltetrahydropteroyltri-L-glutamate + L-homocysteine = tetrahydropteroyltri-L-glutamate + L-methionine. It participates in amino-acid biosynthesis; L-methionine biosynthesis via de novo pathway; L-methionine from L-homocysteine (MetE route): step 1/1. Its function is as follows. Catalyzes the transfer of a methyl group from 5-methyltetrahydrofolate to homocysteine resulting in methionine formation. The protein is 5-methyltetrahydropteroyltriglutamate--homocysteine methyltransferase of Campylobacter jejuni (strain RM1221).